Here is a 96-residue protein sequence, read N- to C-terminus: Protein RnfH (96 aa).

Belongs to the UPF0125 (RnfH) family.

The protein is Protein RnfH of Shigella flexneri.